The following is an 87-amino-acid chain: Signal recognition particle 19 kDa protein (87 aa).

Belongs to the SRP19 family. As to quaternary structure, part of the signal recognition particle protein translocation system, which is composed of SRP and FtsY. Archaeal SRP consists of a 7S RNA molecule of 300 nucleotides and two protein subunits: SRP54 and SRP19.

The protein localises to the cytoplasm. Its function is as follows. Involved in targeting and insertion of nascent membrane proteins into the cytoplasmic membrane. Binds directly to 7S RNA and mediates binding of the 54 kDa subunit of the SRP. This chain is Signal recognition particle 19 kDa protein, found in Methanocaldococcus jannaschii (strain ATCC 43067 / DSM 2661 / JAL-1 / JCM 10045 / NBRC 100440) (Methanococcus jannaschii).